A 202-amino-acid chain; its full sequence is Glycerol-3-phosphate acyltransferase (202 aa).

Helical transmembrane passes span 3-23, 61-81, 87-107, 118-138, 144-164, and 167-187; these read NLII…LILA, IATI…LKFL, LLWS…YLLF, GAMI…WVVI, ISSL…FIFN, and LEIH…YKHL.

Belongs to the PlsY family. As to quaternary structure, probably interacts with PlsX.

The protein localises to the cell inner membrane. The catalysed reaction is an acyl phosphate + sn-glycerol 3-phosphate = a 1-acyl-sn-glycero-3-phosphate + phosphate. It functions in the pathway lipid metabolism; phospholipid metabolism. Catalyzes the transfer of an acyl group from acyl-phosphate (acyl-PO(4)) to glycerol-3-phosphate (G3P) to form lysophosphatidic acid (LPA). This enzyme utilizes acyl-phosphate as fatty acyl donor, but not acyl-CoA or acyl-ACP. The sequence is that of Glycerol-3-phosphate acyltransferase from Campylobacter jejuni subsp. jejuni serotype O:6 (strain 81116 / NCTC 11828).